Here is a 196-residue protein sequence, read N- to C-terminus: UPF0200 protein MK0400 (196 aa).

7-14 (GMPGAGKG) contributes to the ATP binding site.

This sequence belongs to the UPF0200 family.

The protein is UPF0200 protein MK0400 of Methanopyrus kandleri (strain AV19 / DSM 6324 / JCM 9639 / NBRC 100938).